We begin with the raw amino-acid sequence, 62 residues long: Photosystem II reaction center protein Z (62 aa).

2 helical membrane-spanning segments follow: residues 8-28 (ALFA…IVFA) and 41-61 (FSGT…NSLI).

It belongs to the PsbZ family. PSII is composed of 1 copy each of membrane proteins PsbA, PsbB, PsbC, PsbD, PsbE, PsbF, PsbH, PsbI, PsbJ, PsbK, PsbL, PsbM, PsbT, PsbY, PsbZ, Psb30/Ycf12, at least 3 peripheral proteins of the oxygen-evolving complex and a large number of cofactors. It forms dimeric complexes.

It is found in the plastid. The protein resides in the chloroplast thylakoid membrane. Functionally, may control the interaction of photosystem II (PSII) cores with the light-harvesting antenna, regulates electron flow through the 2 photosystem reaction centers. PSII is a light-driven water plastoquinone oxidoreductase, using light energy to abstract electrons from H(2)O, generating a proton gradient subsequently used for ATP formation. The sequence is that of Photosystem II reaction center protein Z from Drimys granadensis.